The following is a 362-amino-acid chain: Phosphoserine aminotransferase (362 aa).

R42 is a binding site for L-glutamate. The pyridoxal 5'-phosphate site is built by W102, T154, D174, and Q197. Position 198 is an N6-(pyridoxal phosphate)lysine (K198). A pyridoxal 5'-phosphate-binding site is contributed by 239-240; the sequence is NT.

The protein belongs to the class-V pyridoxal-phosphate-dependent aminotransferase family. SerC subfamily. In terms of assembly, homodimer. The cofactor is pyridoxal 5'-phosphate.

It localises to the cytoplasm. It catalyses the reaction O-phospho-L-serine + 2-oxoglutarate = 3-phosphooxypyruvate + L-glutamate. The catalysed reaction is 4-(phosphooxy)-L-threonine + 2-oxoglutarate = (R)-3-hydroxy-2-oxo-4-phosphooxybutanoate + L-glutamate. It functions in the pathway amino-acid biosynthesis; L-serine biosynthesis; L-serine from 3-phospho-D-glycerate: step 2/3. The protein operates within cofactor biosynthesis; pyridoxine 5'-phosphate biosynthesis; pyridoxine 5'-phosphate from D-erythrose 4-phosphate: step 3/5. Functionally, catalyzes the reversible conversion of 3-phosphohydroxypyruvate to phosphoserine and of 3-hydroxy-2-oxo-4-phosphonooxybutanoate to phosphohydroxythreonine. This is Phosphoserine aminotransferase from Haemophilus ducreyi (strain 35000HP / ATCC 700724).